Reading from the N-terminus, the 539-residue chain is Probable protein kinase UbiB (539 aa).

Residues 23–43 (DLLFALPLPWWMLALRFVLPW) traverse the membrane as a helical segment. Residues 125 to 492 (RFDEKPLASA…WHDRKDEPVL (368 aa)) enclose the Protein kinase domain. ATP is bound by residues 131 to 139 (LASASVAQV) and K153. D288 functions as the Proton acceptor in the catalytic mechanism. The next 2 helical transmembrane spans lie at 494–514 (LIGA…SEAA) and 517–537 (LLTL…YLIV).

It belongs to the ABC1 family. UbiB subfamily.

Its subcellular location is the cell inner membrane. Its pathway is cofactor biosynthesis; ubiquinone biosynthesis [regulation]. Its function is as follows. Is probably a protein kinase regulator of UbiI activity which is involved in aerobic coenzyme Q (ubiquinone) biosynthesis. This is Probable protein kinase UbiB from Pseudomonas syringae pv. syringae (strain B728a).